Reading from the N-terminus, the 624-residue chain is Threonine--tRNA ligase (624 aa).

The editing domain stretch occupies residues 1-143 (MRLLFIHADE…SRTVTPEAAE (143 aa)). The catalytic stretch occupies residues 197-499 (AHVKLMREKE…EQEGKLPTLP (303 aa)). 3 residues coordinate Zn(2+): Cys-289, His-340, and His-467. The segment at 598-624 (LERETEGKPRVPLTIPDRLSRRPRFGR) is disordered.

This sequence belongs to the class-II aminoacyl-tRNA synthetase family. Homodimer. Requires Zn(2+) as cofactor.

It is found in the cytoplasm. The enzyme catalyses tRNA(Thr) + L-threonine + ATP = L-threonyl-tRNA(Thr) + AMP + diphosphate + H(+). In terms of biological role, catalyzes the attachment of threonine to tRNA(Thr) in a two-step reaction: L-threonine is first activated by ATP to form Thr-AMP and then transferred to the acceptor end of tRNA(Thr). Also edits incorrectly charged L-seryl-tRNA(Thr). This is Threonine--tRNA ligase from Methanopyrus kandleri (strain AV19 / DSM 6324 / JCM 9639 / NBRC 100938).